A 423-amino-acid chain; its full sequence is Glucose-1-phosphate adenylyltransferase (423 aa).

Residues Y98, G163, 178–179 (EK), and S189 contribute to the alpha-D-glucose 1-phosphate site.

This sequence belongs to the bacterial/plant glucose-1-phosphate adenylyltransferase family. In terms of assembly, homotetramer.

The catalysed reaction is alpha-D-glucose 1-phosphate + ATP + H(+) = ADP-alpha-D-glucose + diphosphate. The protein operates within glycan biosynthesis; glycogen biosynthesis. In terms of biological role, involved in the biosynthesis of ADP-glucose, a building block required for the elongation reactions to produce glycogen. Catalyzes the reaction between ATP and alpha-D-glucose 1-phosphate (G1P) to produce pyrophosphate and ADP-Glc. The chain is Glucose-1-phosphate adenylyltransferase from Thermotoga maritima (strain ATCC 43589 / DSM 3109 / JCM 10099 / NBRC 100826 / MSB8).